Consider the following 530-residue polypeptide: Amidase FVEG_08295 (530 aa).

Active-site charge relay system residues include Lys138 and Ser214. Residues Ser214 and 235–238 (IAGS) contribute to the substrate site. Residue Ser238 is the Acyl-ester intermediate of the active site.

Belongs to the amidase family.

It carries out the reaction a monocarboxylic acid amide + H2O = a monocarboxylate + NH4(+). Its pathway is xenobiotic degradation. Amidase; part of the Fusarium detoxification of benzoxazolinone cluster 1 (FDB1) involved in the degradation of benzoxazolinones produced by the host plant. Maize, wheat, and rye produce the 2 benzoxazinone phytoanticipins 2,4-dihy-droxy-7-methoxy-1,4-benzoxazin-3-one (DIMBOA) and 2,4-dihydroxy-1,4-benzoxazin-3-one (DIBOA) that, due to their inherent instability once released, spontaneously degrade to the more stable corresponding benzoxazolinones, 6-methoxy-2-benzoxazolinone (MBOA) and 2-benzoxazolinone (BOA), respectively. The first step in the detoxification of benzoxazolinones involves the hydrolysis of the cyclic ester bond of benzoxazolinones by the FDB1 cluster gamma-lactamase MBL1 to aminophenols. MBL1 is able to convert BOA into 2-aminophenol (2-AP), as well as MBOA into 5-methoxy-2-aminophenol (2-AMP). The FDB2 cluster N-malonyltransferase FDB2/NAT1 then metabolizes aminophenols via N-malonylation to non-toxic malonamic acids. FDB2/NAT1 converts 2-AP into N-(2-hydroxyphenyl) malonamic acid (HPMA) and 2-AMP into N-(2-hydroxy-4-methoxyphenyl) malonamic acid (HMPMA). The duplicated dienlactone hydrolases DLH1 and DLH2 may provide redundant function for hydrolyzing the lactone moiety in the BOA molecule. The roles of the amidases an other enzymes encoded by the 2 FDB clusters have not been identified so far. This Gibberella moniliformis (strain M3125 / FGSC 7600) (Maize ear and stalk rot fungus) protein is Amidase FVEG_08295.